A 612-amino-acid chain; its full sequence is MSNSHPLRPFTAVGEIDHVHILSEHIGALLIGEEYGDVTFVVEKKRFPAHRVILAARCQYFRALLYGGMRESQPEAEIPLQDTTAEAFTMLLKYIYTGRATLTDEKEEVLLDFLSLAHKYGFPELEDSTSEYLCTILNIQNVCMTFDVASLYSLPKLTCMCCMFMDRNAQEVLSSEGFLSLSKTALLNIVLRDSFAAPEKDIFLALLNWCKHNSKENHAEIMQAVRLPLMSLTELLNVVRPSGLLSPDAILDAIKVRSESRDMDLNYRGMLIPEENIATMKYGAQVVKGELKSALLDGDTQNYDLDHGFSRHPIDDDCRSGIEIKLGQPSIINHIRILLWDRDSRSYSYFIEVSMDELDWVRVIDHSQYLCRSWQKLYFPARVCRYIRIVGTHNTVNKIFHIVAFECMFTNKTFTLEKGLIVPMENVATIADCASVIEGVSRSRNALLNGDTKNYDWDSGYTCHQLGSGAIVVQLAQPYMIGSIRLLLWDCDDRSYSYYVEVSTNQQQWTMVADRTKVSCKSWQSVTFERQPASFIRIVGTHNTANEVFHCVHFECPEQQSSQKEENSEESGTGDTSLAGQQLDSHALRAPSGSSLPSSPGSNSRSPNRQHQ.

The 69-residue stretch at 36–104 (GDVTFVVEKK…IYTGRATLTD (69 aa)) folds into the BTB domain. Residues 142 to 240 (VCMTFDVASL…SLTELLNVVR (99 aa)) form the BACK domain. The tract at residues 560 to 612 (QSSQKEENSEESGTGDTSLAGQQLDSHALRAPSGSSLPSSPGSNSRSPNRQHQ) is disordered. Residues 573–584 (TGDTSLAGQQLD) are compositionally biased toward polar residues. The span at 588 to 612 (LRAPSGSSLPSSPGSNSRSPNRQHQ) shows a compositional bias: low complexity.

Detected in the brain (at protein level). Moderately expressed in all specific brain regions examined. Expressed in the dopaminergic neurons of the substantia nigra and A11 neurons. Highly expressed in kidney and moderately expressed in all other adult and fetal tissues.

The sequence is that of BTB/POZ domain-containing protein 9 (BTBD9) from Homo sapiens (Human).